The following is a 475-amino-acid chain: Ankyrin repeat, SAM and basic leucine zipper domain-containing protein 1 (475 aa).

The tract at residues 1–25 (MAAGTLRGLAVAGGGESSDSEDDGW) is disordered. Ser-17, Ser-18, and Ser-20 each carry phosphoserine. ANK repeat units follow at residues 45–74 (EKNETFKKALTTGDISLVKELLDSGINVDS), 78–107 (YGWTPLMYAASVANAELVRFLLDRGANASF), 110–144 (DKLTILISACSARGSEEQVLKCVELLLSRNADPNT), 148–177 (RLMTPIMYAARDGHTQVVALLVAHGAEVNA), 181–210 (NGYTALTWAARQGHKNVILKLLELGANKML), and 214–243 (DGRTPSEIAKRNKHLEIFNFLSLTLNPLEG). One can recognise an SAM domain in the interval 272–334 (PYTAFGDLEI…KILAALKELE (63 aa)).

Interacts with DDX4, PIWIL1, RANBP9 and TDRD1. Expressed exclusively in testis and ovary with higher levels in testis.

Its subcellular location is the cytoplasm. Its function is as follows. Plays a central role during spermatogenesis by repressing transposable elements and preventing their mobilization, which is essential for the germline integrity. Acts via the piRNA metabolic process, which mediates the repression of transposable elements during meiosis by forming complexes composed of piRNAs and Piwi proteins and governs the methylation and subsequent repression of transposons. Its association with pi-bodies suggests a participation in the primary piRNAs metabolic process. Required prior to the pachytene stage to facilitate the production of multiple types of piRNAs, including those associated with repeats involved in regulation of retrotransposons. May act by mediating protein-protein interactions during germ cell maturation. The protein is Ankyrin repeat, SAM and basic leucine zipper domain-containing protein 1 of Mus musculus (Mouse).